Reading from the N-terminus, the 814-residue chain is MVIGNTRPINIEDEMKNSYMDYAMSVIVSRALPDVRDGLKPVHRRILYAMSDLGMHYNTSYKKSARIVGEVLGKYHPHGDSSVYDAMVRMAQNFSLRYMLVDGQGNFGSVDGDPPAAMRYTEARLTRLAGELLVDIDKDTVEFMPNFDDSLKEPTVLPSRLPVLLMNGASGIAVGMATNIPPHNLTELCDAISYLIDNPECGLEDLMQFVKGPDFPTGGLILGRDGIKSAYATGHGKVVVRARAHVADVAETGARRQIIISELPYQVNKADLVKRIAMLSRERKINGIAEVRDESDRQGLRVVIELKRDGEPQQILNNLYKHTNLQTSFFVNMLALVNNRPVVLNLKEALNHYVAFRQEIITRRSKFELKAARARAHILEGLKIALDNLDAIINLIRHAENADTARRELMSRFELSQLQAQAILDLQLRRLANLERQKILGEYADILKQISYLEDLLANPRKVLSLVKDDLAEVKARYGDARRTEIQSQGVIEFREEDLIPHQSMVVTLTERGFIKRVPTEVYRLQHRAGRGKSIIKTREADSVRFIMVADTHDSVLLFTNRGKIFSIKCHEIPCDLLRTAKGIAIINLVPLAENERITSMIAVSRFDEETSLIMATSGGECKRTKLSDFAAVRSSGLLAMDLPKNDELIGAVIAGADENIILITHNGRSIHFPVADLRVSQRASGGVRGITLEGDDRVAGLDVARPGHFVLVVTTGGYGKLTAVEEYPLQRRAGSGVLTFKVVDKTGKVAAGKVVDREHQVMIATAEGVVIRTPVGTEDQEKGIIVMGRSTQGVIVIRPDENDRVVNFATMVE.

One can recognise a Topo IIA-type catalytic domain in the interval 32–499 (LPDVRDGLKP…GVIEFREEDL (468 aa)). Tyr-120 (O-(5'-phospho-DNA)-tyrosine intermediate) is an active-site residue. Positions 526-532 (QHRAGRG) match the GyrA-box motif.

This sequence belongs to the type II topoisomerase GyrA/ParC subunit family. In terms of assembly, heterotetramer, composed of two GyrA and two GyrB chains. In the heterotetramer, GyrA contains the active site tyrosine that forms a transient covalent intermediate with DNA, while GyrB binds cofactors and catalyzes ATP hydrolysis.

It localises to the cytoplasm. The enzyme catalyses ATP-dependent breakage, passage and rejoining of double-stranded DNA.. Its function is as follows. A type II topoisomerase that negatively supercoils closed circular double-stranded (ds) DNA in an ATP-dependent manner to modulate DNA topology and maintain chromosomes in an underwound state. Negative supercoiling favors strand separation, and DNA replication, transcription, recombination and repair, all of which involve strand separation. Also able to catalyze the interconversion of other topological isomers of dsDNA rings, including catenanes and knotted rings. Type II topoisomerases break and join 2 DNA strands simultaneously in an ATP-dependent manner. This chain is DNA gyrase subunit A, found in Dehalogenimonas lykanthroporepellens (strain ATCC BAA-1523 / JCM 15061 / BL-DC-9).